The chain runs to 127 residues: Probable toxin y4kH (127 aa).

It belongs to the MbcT/ParT/Res family.

Its function is as follows. Probable toxic component of a type II toxin-antitoxin (TA) system. It is not known which gene encodes its antitoxin. This Sinorhizobium fredii (strain NBRC 101917 / NGR234) protein is Probable toxin y4kH.